Here is a 361-residue protein sequence, read N- to C-terminus: Peptide chain release factor 1 (361 aa).

Glutamine 237 is subject to N5-methylglutamine. Basic and acidic residues predominate over residues valine 283–arginine 296. The interval valine 283 to arginine 305 is disordered.

The protein belongs to the prokaryotic/mitochondrial release factor family. Post-translationally, methylated by PrmC. Methylation increases the termination efficiency of RF1.

Its subcellular location is the cytoplasm. Peptide chain release factor 1 directs the termination of translation in response to the peptide chain termination codons UAG and UAA. This chain is Peptide chain release factor 1, found in Shewanella woodyi (strain ATCC 51908 / MS32).